A 737-amino-acid chain; its full sequence is Transcription termination factor Rho (737 aa).

Positions 1–396 are disordered; it reads MSGPCSAHRV…ENSYLPDPTD (396 aa). 3 stretches are compositionally biased toward low complexity: residues 16 to 28, 62 to 86, and 101 to 111; these read RPTI…TRSS, ASRA…GSDA, and DAESAPTAADT. 4 stretches are compositionally biased toward basic and acidic residues: residues 145–175, 196–256, 266–279, and 286–324; these read PRAE…HESR, SMER…DRRD, GRPD…DRHQ, and DRSH…DRGG. A compositionally biased stretch (basic residues) spans 328 to 339; it reads RNGRRGRNRFRR. Over residues 347–360 the composition is skewed to polar residues; that stretch reads APISGSHAPSQGSP. The Rho RNA-BD domain maps to 367-439; it reads EGTMAGWFDP…IEVQTLNDGS (73 aa). The segment covering 376-387 has biased composition (basic and acidic residues); it reads PSRDGGFLRRPE. Residues 487–492, 499–504, and Arg530 each bind ATP; these read GYGQRA and RAGKTT.

This sequence belongs to the Rho family. Homohexamer. The homohexamer assembles into an open ring structure.

In terms of biological role, facilitates transcription termination by a mechanism that involves Rho binding to the nascent RNA, activation of Rho's RNA-dependent ATPase activity, and release of the mRNA from the DNA template. This chain is Transcription termination factor Rho, found in Gemmatimonas aurantiaca (strain DSM 14586 / JCM 11422 / NBRC 100505 / T-27).